Reading from the N-terminus, the 491-residue chain is Probable glycine dehydrogenase (decarboxylating) subunit 2 (491 aa).

Lys273 carries the post-translational modification N6-(pyridoxal phosphate)lysine.

The protein belongs to the GcvP family. C-terminal subunit subfamily. As to quaternary structure, the glycine cleavage system is composed of four proteins: P, T, L and H. In this organism, the P 'protein' is a heterodimer of two subunits. Pyridoxal 5'-phosphate serves as cofactor.

The enzyme catalyses N(6)-[(R)-lipoyl]-L-lysyl-[glycine-cleavage complex H protein] + glycine + H(+) = N(6)-[(R)-S(8)-aminomethyldihydrolipoyl]-L-lysyl-[glycine-cleavage complex H protein] + CO2. Functionally, the glycine cleavage system catalyzes the degradation of glycine. The P protein binds the alpha-amino group of glycine through its pyridoxal phosphate cofactor; CO(2) is released and the remaining methylamine moiety is then transferred to the lipoamide cofactor of the H protein. This chain is Probable glycine dehydrogenase (decarboxylating) subunit 2, found in Bacillus thuringiensis (strain Al Hakam).